The primary structure comprises 491 residues: UDP-N-acetylmuramate--L-alanine ligase (491 aa).

126–132 provides a ligand contact to ATP; the sequence is GTHGKTT.

The protein belongs to the MurCDEF family.

It is found in the cytoplasm. The catalysed reaction is UDP-N-acetyl-alpha-D-muramate + L-alanine + ATP = UDP-N-acetyl-alpha-D-muramoyl-L-alanine + ADP + phosphate + H(+). It functions in the pathway cell wall biogenesis; peptidoglycan biosynthesis. Functionally, cell wall formation. This Salmonella agona (strain SL483) protein is UDP-N-acetylmuramate--L-alanine ligase.